The following is a 262-amino-acid chain: tRNA (guanine-N(1)-)-methyltransferase (262 aa).

S-adenosyl-L-methionine-binding positions include Gly-113 and 137 to 142 (IGDYVL).

This sequence belongs to the RNA methyltransferase TrmD family. Homodimer.

The protein resides in the cytoplasm. It catalyses the reaction guanosine(37) in tRNA + S-adenosyl-L-methionine = N(1)-methylguanosine(37) in tRNA + S-adenosyl-L-homocysteine + H(+). Its function is as follows. Specifically methylates guanosine-37 in various tRNAs. The polypeptide is tRNA (guanine-N(1)-)-methyltransferase (Saccharopolyspora erythraea (strain ATCC 11635 / DSM 40517 / JCM 4748 / NBRC 13426 / NCIMB 8594 / NRRL 2338)).